Reading from the N-terminus, the 136-residue chain is Protein LpdD (136 aa).

It belongs to the CinA family.

In terms of biological role, probably involved in tannin degradation, however the precise biochemical function in metabolism of gallate is unknown. In Lactiplantibacillus plantarum (strain ATCC BAA-793 / NCIMB 8826 / WCFS1) (Lactobacillus plantarum), this protein is Protein LpdD.